The following is a 222-amino-acid chain: UPF0502 protein XCC4136 (222 aa).

The protein belongs to the UPF0502 family.

The polypeptide is UPF0502 protein XCC4136 (Xanthomonas campestris pv. campestris (strain ATCC 33913 / DSM 3586 / NCPPB 528 / LMG 568 / P 25)).